We begin with the raw amino-acid sequence, 233 residues long: Lipoprotein-releasing system ATP-binding protein LolD (233 aa).

The ABC transporter domain occupies 10 to 233 (YRLEGVGKEY…AGELYDQHRP (224 aa)). Position 46–53 (46–53 (GASGSGKS)) interacts with ATP.

Belongs to the ABC transporter superfamily. Lipoprotein translocase (TC 3.A.1.125) family. In terms of assembly, the complex is composed of two ATP-binding proteins (LolD) and two transmembrane proteins (LolC and LolE).

It localises to the cell inner membrane. In terms of biological role, part of the ABC transporter complex LolCDE involved in the translocation of mature outer membrane-directed lipoproteins, from the inner membrane to the periplasmic chaperone, LolA. Responsible for the formation of the LolA-lipoprotein complex in an ATP-dependent manner. The polypeptide is Lipoprotein-releasing system ATP-binding protein LolD (Nitratidesulfovibrio vulgaris (strain ATCC 29579 / DSM 644 / CCUG 34227 / NCIMB 8303 / VKM B-1760 / Hildenborough) (Desulfovibrio vulgaris)).